The following is a 1882-amino-acid chain: uncharacterized protein (1882 aa).

The chain crosses the membrane as a helical span at residues 16–36 (FFLLFGIIFVLFSIIFLETSI). Disordered stretches follow at residues 103–129 (DFGSDSEKKDSTTKSSDNNPRKGDVND), 220–306 (FPGD…ESET), 492–513 (VALAQQQQDKQESSADDGVKDP), and 658–698 (QTDE…TKST). Residues 221-239 (PGDKGKGEDKKTTKKKSEI) show a composition bias toward basic and acidic residues. Polar residues predominate over residues 240 to 249 (KQASSATTVL). 3 stretches are compositionally biased toward basic and acidic residues: residues 259-275 (TDAKETTNNEEPKKDSN), 284-294 (NKDKVWFKSDE), and 500-511 (DKQESSADDGVK). Positions 667–698 (AKTTQGTTDSLTQLADASSSSSSSSTGDTKST) are enriched in low complexity. 4 consecutive transmembrane segments (helical) span residues 987-1007 (ASVVIAAFLSILALYLTILLI), 1037-1057 (VFAGIVALASSFFGVLFAFLL), 1080-1100 (WISFFGSMLLIFVIFQFISWI), and 1154-1174 (LFTYVGLSSIALLLIGIAGTI). Disordered regions lie at residues 1233–1253 (DQIQQQQQQQQQQGNDKEHPY) and 1572–1598 (KDGQSTDDSGGTSSGGGSCGGGSTSST). The span at 1234-1245 (QIQQQQQQQQQQ) shows a compositional bias: low complexity. Residues 1583-1594 (TSSGGGSCGGGS) show a composition bias toward gly residues. Transmembrane regions (helical) follow at residues 1759-1779 (FLLGTIIPFIFITCVVLGISM), 1807-1827 (FFIPAFVLSLLISIAILAGLL), 1828-1848 (VGVQALVFGVAQVFLTNVFEF), and 1851-1871 (YMVGIVLFGATIFVIGSYFWI).

The protein belongs to the ABC-4 integral membrane protein family.

The protein resides in the cell membrane. This is an uncharacterized protein from Mycoplasma pneumoniae (strain ATCC 29342 / M129 / Subtype 1) (Mycoplasmoides pneumoniae).